The chain runs to 412 residues: Glucose-1-phosphate adenylyltransferase (412 aa).

Residues Y98, G163, 178–179 (EK), and S189 each bind alpha-D-glucose 1-phosphate.

It belongs to the bacterial/plant glucose-1-phosphate adenylyltransferase family. As to quaternary structure, homotetramer.

The catalysed reaction is alpha-D-glucose 1-phosphate + ATP + H(+) = ADP-alpha-D-glucose + diphosphate. It functions in the pathway glycan biosynthesis; glycogen biosynthesis. Functionally, involved in the biosynthesis of ADP-glucose, a building block required for the elongation reactions to produce glycogen. Catalyzes the reaction between ATP and alpha-D-glucose 1-phosphate (G1P) to produce pyrophosphate and ADP-Glc. This Thermosipho africanus (strain TCF52B) protein is Glucose-1-phosphate adenylyltransferase.